A 193-amino-acid polypeptide reads, in one-letter code: ATP-dependent Clp protease proteolytic subunit (193 aa).

Catalysis depends on S98, which acts as the Nucleophile. H123 is an active-site residue.

This sequence belongs to the peptidase S14 family. Fourteen ClpP subunits assemble into 2 heptameric rings which stack back to back to give a disk-like structure with a central cavity, resembling the structure of eukaryotic proteasomes.

Its subcellular location is the cytoplasm. It carries out the reaction Hydrolysis of proteins to small peptides in the presence of ATP and magnesium. alpha-casein is the usual test substrate. In the absence of ATP, only oligopeptides shorter than five residues are hydrolyzed (such as succinyl-Leu-Tyr-|-NHMec, and Leu-Tyr-Leu-|-Tyr-Trp, in which cleavage of the -Tyr-|-Leu- and -Tyr-|-Trp bonds also occurs).. In terms of biological role, cleaves peptides in various proteins in a process that requires ATP hydrolysis. Has a chymotrypsin-like activity. Plays a major role in the degradation of misfolded proteins. The protein is ATP-dependent Clp protease proteolytic subunit of Histophilus somni (strain 2336) (Haemophilus somnus).